A 273-amino-acid polypeptide reads, in one-letter code: Large ribosomal subunit protein uL2 (273 aa).

Disordered regions lie at residues 30–50 and 221–273; these read YAPLLDTKSKTGGRNNFGRIT and RGTA…RRGK. Basic residues predominate over residues 253–273; sequence KGKKTRHNKRTDKFIVRRRGK.

Belongs to the universal ribosomal protein uL2 family. Part of the 50S ribosomal subunit. Forms a bridge to the 30S subunit in the 70S ribosome.

In terms of biological role, one of the primary rRNA binding proteins. Required for association of the 30S and 50S subunits to form the 70S ribosome, for tRNA binding and peptide bond formation. It has been suggested to have peptidyltransferase activity; this is somewhat controversial. Makes several contacts with the 16S rRNA in the 70S ribosome. The chain is Large ribosomal subunit protein uL2 from Pasteurella multocida (strain Pm70).